Here is a 235-residue protein sequence, read N- to C-terminus: Small ribosomal subunit protein uS2 (235 aa).

Belongs to the universal ribosomal protein uS2 family.

The protein is Small ribosomal subunit protein uS2 of Geobacillus sp. (strain WCH70).